The following is a 346-amino-acid chain: 4-hydroxy-2-oxovalerate aldolase (346 aa).

Residues 8-260 enclose the Pyruvate carboxyltransferase domain; the sequence is VILHDMSLRD…ETGIDLYKIM (253 aa). Position 16 to 17 (16 to 17) interacts with substrate; that stretch reads RD. Aspartate 17 contacts Mn(2+). The Proton acceptor role is filled by histidine 20. Residues serine 170 and histidine 199 each contribute to the substrate site. Residues histidine 199 and histidine 201 each contribute to the Mn(2+) site. Position 290 (tyrosine 290) interacts with substrate.

It belongs to the 4-hydroxy-2-oxovalerate aldolase family.

It catalyses the reaction (S)-4-hydroxy-2-oxopentanoate = acetaldehyde + pyruvate. The protein operates within aromatic compound metabolism; naphthalene degradation. The sequence is that of 4-hydroxy-2-oxovalerate aldolase (nahM) from Pseudomonas putida (Arthrobacter siderocapsulatus).